Here is a 298-residue protein sequence, read N- to C-terminus: Porphobilinogen deaminase (298 aa).

The residue at position 239 (Cys-239) is an S-(dipyrrolylmethanemethyl)cysteine.

Belongs to the HMBS family. In terms of assembly, monomer. Dipyrromethane serves as cofactor.

The enzyme catalyses 4 porphobilinogen + H2O = hydroxymethylbilane + 4 NH4(+). Its pathway is porphyrin-containing compound metabolism; protoporphyrin-IX biosynthesis; coproporphyrinogen-III from 5-aminolevulinate: step 2/4. Its function is as follows. Tetrapolymerization of the monopyrrole PBG into the hydroxymethylbilane pre-uroporphyrinogen in several discrete steps. This chain is Porphobilinogen deaminase, found in Ehrlichia canis (strain Jake).